Consider the following 367-residue polypeptide: BTB/POZ domain-containing protein Tiwaz (367 aa).

2 disordered regions span residues 16–46 (LTVD…PRDL) and 62–87 (SSPT…SSVT). A compositionally biased stretch (basic and acidic residues) spans 28–45 (CDMDRERERDVKALEPRD). The 71-residue stretch at 135-205 (APVHIDVGGT…MRNSRLLIAE (71 aa)) folds into the BTB domain. Positions 240-261 (GNYLVAPPTPPARHIKTSPRTS) are disordered.

Functionally, functions with the transcription factor TfAP-2 to regulate octopamine neuronal signaling pathways that control behaviors such as male aggression, male mating, and the initiation of feeding. Required for TfAP-2 transcriptional activity in octopaminergic neurons. Functions with TfAP-2 to regulate expression of genes which are involved in promoting octopamine production and secretion from octopaminergic neurons, such as Tbh and Vmat. Octopamine then modulates feeding and male aggression by regulating the expression of the satiation hormone Dsk in insulin-producing cells (IPCs). Functions with octopamine and Dsk as part of a negative feedback loop to prevent overeating; acts with TfAP-2 to regulate octopamine signaling pathways that initiate feeding, then octopamine activates expression of Dsk which inhibits consummatory behavior. May also be involved in negatively regulating nociception in larvae to prevent spontaneous pain and hyperalgesia. The protein is BTB/POZ domain-containing protein Tiwaz of Drosophila melanogaster (Fruit fly).